The chain runs to 335 residues: Acetyl-coenzyme A carboxylase carboxyl transferase subunit alpha (335 aa).

The 255-residue stretch at 40–294 (QLETLAARRR…KEAIEKHLNA (255 aa)) folds into the CoA carboxyltransferase C-terminal domain.

This sequence belongs to the AccA family. In terms of assembly, acetyl-CoA carboxylase is a heterohexamer composed of biotin carboxyl carrier protein (AccB), biotin carboxylase (AccC) and two subunits each of ACCase subunit alpha (AccA) and ACCase subunit beta (AccD).

It is found in the cytoplasm. The enzyme catalyses N(6)-carboxybiotinyl-L-lysyl-[protein] + acetyl-CoA = N(6)-biotinyl-L-lysyl-[protein] + malonyl-CoA. It functions in the pathway lipid metabolism; malonyl-CoA biosynthesis; malonyl-CoA from acetyl-CoA: step 1/1. Its function is as follows. Component of the acetyl coenzyme A carboxylase (ACC) complex. First, biotin carboxylase catalyzes the carboxylation of biotin on its carrier protein (BCCP) and then the CO(2) group is transferred by the carboxyltransferase to acetyl-CoA to form malonyl-CoA. This is Acetyl-coenzyme A carboxylase carboxyl transferase subunit alpha from Prochlorococcus marinus (strain MIT 9215).